The sequence spans 267 residues: Cell division protein FtsQ (267 aa).

Over 1-32 (MRKKTSSNKKKQTKKTNNISLRRKLRLIYKKA) the chain is Cytoplasmic. A helical membrane pass occupies residues 33-53 (ILGLKIALIIFVCLFVFTKYF). The Periplasmic portion of the chain corresponds to 54-267 (AGIKTYLTTN…DKNKYYIEKY (214 aa)). One can recognise a POTRA domain in the interval 73-141 (FKLENVIIEG…NTVYIKLFER (69 aa)).

The protein belongs to the FtsQ/DivIB family. FtsQ subfamily.

It is found in the cell inner membrane. Its function is as follows. Essential cell division protein. The protein is Cell division protein FtsQ of Rickettsia felis (strain ATCC VR-1525 / URRWXCal2) (Rickettsia azadi).